The sequence spans 156 residues: MPRKGPAPKRPLVVDPVYGSPVVTQLINKVLQDGKKSTAERIVYGALEGVRNKTNSDPVATLKKALENVKPALEVRSRRVGGATYQVPVEVKAGRAQALSLRWLVGYSKARRENTMTERLQNEILDASNGLGAAVKRREDTHKMAESNKAFAHYRW.

The protein belongs to the universal ribosomal protein uS7 family. Part of the 30S ribosomal subunit. Contacts proteins S9 and S11.

Its function is as follows. One of the primary rRNA binding proteins, it binds directly to 16S rRNA where it nucleates assembly of the head domain of the 30S subunit. Is located at the subunit interface close to the decoding center, probably blocks exit of the E-site tRNA. This Kocuria rhizophila (strain ATCC 9341 / DSM 348 / NBRC 103217 / DC2201) protein is Small ribosomal subunit protein uS7.